The following is an 873-amino-acid chain: Leucine--tRNA ligase (873 aa).

Residues 47–57 (PYPSGKLHMGH) carry the 'HIGH' region motif. A 'KMSKS' region motif is present at residues 636-640 (KMSKS). Position 639 (K639) interacts with ATP.

This sequence belongs to the class-I aminoacyl-tRNA synthetase family.

It localises to the cytoplasm. It catalyses the reaction tRNA(Leu) + L-leucine + ATP = L-leucyl-tRNA(Leu) + AMP + diphosphate. In Acinetobacter baylyi (strain ATCC 33305 / BD413 / ADP1), this protein is Leucine--tRNA ligase.